The chain runs to 245 residues: tRNA (guanine-N(7)-)-methyltransferase (245 aa).

Residues Glu-71, Glu-96, Asp-123, and Asp-146 each contribute to the S-adenosyl-L-methionine site. Asp-146 is a catalytic residue. Lys-150 contacts substrate. The segment at 152–157 (KHNKRR) is interaction with RNA. Substrate-binding positions include Asp-182 and 224–227 (TKFE).

This sequence belongs to the class I-like SAM-binding methyltransferase superfamily. TrmB family.

The catalysed reaction is guanosine(46) in tRNA + S-adenosyl-L-methionine = N(7)-methylguanosine(46) in tRNA + S-adenosyl-L-homocysteine. Its pathway is tRNA modification; N(7)-methylguanine-tRNA biosynthesis. In terms of biological role, catalyzes the formation of N(7)-methylguanine at position 46 (m7G46) in tRNA. This chain is tRNA (guanine-N(7)-)-methyltransferase, found in Albidiferax ferrireducens (strain ATCC BAA-621 / DSM 15236 / T118) (Rhodoferax ferrireducens).